We begin with the raw amino-acid sequence, 320 residues long: Ferrochelatase (320 aa).

The Fe cation site is built by H194 and E275.

Belongs to the ferrochelatase family.

It localises to the cytoplasm. It carries out the reaction heme b + 2 H(+) = protoporphyrin IX + Fe(2+). The protein operates within porphyrin-containing compound metabolism; protoheme biosynthesis; protoheme from protoporphyrin-IX: step 1/1. Its function is as follows. Catalyzes the ferrous insertion into protoporphyrin IX. This is Ferrochelatase from Vibrio parahaemolyticus serotype O3:K6 (strain RIMD 2210633).